Reading from the N-terminus, the 94-residue chain is MSRSVKKGPYIQEVLLKRINEMNKNGEKKVLKTWSRSSTIFPQMIGHTIAVHDGRKHVPVYITEDMVGHKLGEFVLTRTYRGHDDKSEKSSRLR.

Belongs to the universal ribosomal protein uS19 family.

In terms of biological role, protein S19 forms a complex with S13 that binds strongly to the 16S ribosomal RNA. The chain is Small ribosomal subunit protein uS19 from Clostridium botulinum (strain Langeland / NCTC 10281 / Type F).